Here is a 113-residue protein sequence, read N- to C-terminus: Retrotransposon Gag-like protein 8B (113 aa).

It belongs to the FAM127 family.

The chain is Retrotransposon Gag-like protein 8B (RTL8B) from Homo sapiens (Human).